The sequence spans 330 residues: Delta-aminolevulinic acid dehydratase (330 aa).

Zn(2+) contacts are provided by C122, C124, H131, and C132. K199 functions as the Schiff-base intermediate with substrate in the catalytic mechanism. The residue at position 199 (K199) is an N6-succinyllysine. R209 serves as a coordination point for 5-aminolevulinate. A Phosphoserine modification is found at S215. Residue R221 participates in 5-aminolevulinate binding. C223 contributes to the Zn(2+) binding site. K252 acts as the Schiff-base intermediate with substrate in catalysis. K252 bears the N6-succinyllysine mark. Positions 279 and 318 each coordinate 5-aminolevulinate.

The protein belongs to the ALAD family. As to quaternary structure, homooctamer; active form. Homohexamer; low activity form. It depends on Zn(2+) as a cofactor.

It localises to the cytoplasm. Its subcellular location is the cytosol. It carries out the reaction 2 5-aminolevulinate = porphobilinogen + 2 H2O + H(+). Its pathway is porphyrin-containing compound metabolism; protoporphyrin-IX biosynthesis; coproporphyrinogen-III from 5-aminolevulinate: step 1/4. Can alternate between a fully active homooctamer and a low-activity homohexamer. A bound magnesium ion may promote the assembly of the fully active homooctamer. The magnesium-binding site is absent in the low-activity homohexamer. Inhibited by compounds that favor the hexameric state. Inhibited by divalent lead ions. The lead ions partially displace the zinc cofactor. In terms of biological role, catalyzes an early step in the biosynthesis of tetrapyrroles. Binds two molecules of 5-aminolevulinate per subunit, each at a distinct site, and catalyzes their condensation to form porphobilinogen. This is Delta-aminolevulinic acid dehydratase (ALAD) from Macaca fascicularis (Crab-eating macaque).